Consider the following 337-residue polypeptide: Heat-inducible transcription repressor HrcA (337 aa).

The protein belongs to the HrcA family.

In terms of biological role, negative regulator of class I heat shock genes (grpE-dnaK-dnaJ and groELS operons). Prevents heat-shock induction of these operons. The chain is Heat-inducible transcription repressor HrcA from Pseudarthrobacter chlorophenolicus (strain ATCC 700700 / DSM 12829 / CIP 107037 / JCM 12360 / KCTC 9906 / NCIMB 13794 / A6) (Arthrobacter chlorophenolicus).